Reading from the N-terminus, the 711-residue chain is Ribosomal RNA large subunit methyltransferase K/L (711 aa).

Residues 43-154 form the THUMP domain; it reads LAYRITLWTR…NGVITIAMNF (112 aa).

Belongs to the methyltransferase superfamily. RlmKL family.

It is found in the cytoplasm. The catalysed reaction is guanosine(2445) in 23S rRNA + S-adenosyl-L-methionine = N(2)-methylguanosine(2445) in 23S rRNA + S-adenosyl-L-homocysteine + H(+). It catalyses the reaction guanosine(2069) in 23S rRNA + S-adenosyl-L-methionine = N(2)-methylguanosine(2069) in 23S rRNA + S-adenosyl-L-homocysteine + H(+). In terms of biological role, specifically methylates the guanine in position 2445 (m2G2445) and the guanine in position 2069 (m7G2069) of 23S rRNA. The polypeptide is Ribosomal RNA large subunit methyltransferase K/L (Shewanella oneidensis (strain ATCC 700550 / JCM 31522 / CIP 106686 / LMG 19005 / NCIMB 14063 / MR-1)).